Reading from the N-terminus, the 163-residue chain is Ribosome maturation factor RimM (163 aa).

The region spanning 90–155 (VGEYYCKDLV…ADIDLNKKRL (66 aa)) is the PRC barrel domain.

Belongs to the RimM family. In terms of assembly, binds ribosomal protein uS19.

The protein localises to the cytoplasm. An accessory protein needed during the final step in the assembly of 30S ribosomal subunit, possibly for assembly of the head region. Essential for efficient processing of 16S rRNA. May be needed both before and after RbfA during the maturation of 16S rRNA. It has affinity for free ribosomal 30S subunits but not for 70S ribosomes. This is Ribosome maturation factor RimM from Neorickettsia sennetsu (strain ATCC VR-367 / Miyayama) (Ehrlichia sennetsu).